A 322-amino-acid polypeptide reads, in one-letter code: GTP 3',8-cyclase (322 aa).

Positions 5–217 (SYGRVIDYLR…NIIAQKYSFK (213 aa)) constitute a Radical SAM core domain. R14 is a GTP binding site. Residues C21 and C25 each coordinate [4Fe-4S] cluster. Y27 is an S-adenosyl-L-methionine binding site. [4Fe-4S] cluster is bound at residue C28. Residue R64 coordinates GTP. An S-adenosyl-L-methionine-binding site is contributed by G68. T95 lines the GTP pocket. S119 is a binding site for S-adenosyl-L-methionine. K155 serves as a coordination point for GTP. An S-adenosyl-L-methionine-binding site is contributed by M189. 2 residues coordinate [4Fe-4S] cluster: C249 and C252. 254–256 (RIR) is a binding site for GTP. C266 is a binding site for [4Fe-4S] cluster.

Belongs to the radical SAM superfamily. MoaA family. Monomer and homodimer. The cofactor is [4Fe-4S] cluster.

It catalyses the reaction GTP + AH2 + S-adenosyl-L-methionine = (8S)-3',8-cyclo-7,8-dihydroguanosine 5'-triphosphate + 5'-deoxyadenosine + L-methionine + A + H(+). Its pathway is cofactor biosynthesis; molybdopterin biosynthesis. Catalyzes the cyclization of GTP to (8S)-3',8-cyclo-7,8-dihydroguanosine 5'-triphosphate. The protein is GTP 3',8-cyclase of Campylobacter lari (strain RM2100 / D67 / ATCC BAA-1060).